The sequence spans 566 residues: Solute carrier family 22 member 16 (566 aa).

A helical transmembrane segment spans residues 20–40 (FASAFQTISCGIHYLASVFIA). 3 N-linked (GlcNAc...) asparagine glycosylation sites follow: Asn-52, Asn-60, and Asn-112. A run of 5 helical transmembrane segments spans residues 149–169 (LIQP…GDIA), 176–196 (PIIW…AFTF), 201–221 (FVIV…VVFV), 237–257 (MHVH…GFLV), and 261–281 (WIYQ…CWML). The N-linked (GlcNAc...) asparagine glycan is linked to Asn-344. A run of 6 helical transmembrane segments spans residues 351–371 (TITV…FALN), 381–401 (LNLF…CLGM), 408–428 (NTLA…MLIP), 436–456 (IAMS…IYLY), 468–488 (LAVG…PFCV), and 493–513 (VWIF…GILT).

This sequence belongs to the major facilitator (TC 2.A.1) superfamily. Organic cation transporter (TC 2.A.1.19) family.

The protein resides in the membrane. Its function is as follows. High affinity carnitine transporter. The protein is Solute carrier family 22 member 16 (slc22a16) of Xenopus laevis (African clawed frog).